Reading from the N-terminus, the 120-residue chain is UPF0344 protein BCAH187_A1308 (120 aa).

4 consecutive transmembrane segments (helical) span residues 6-26, 32-52, 64-84, and 91-111; these read ITAWALGLILFFVAYSLYSAG, VHMGLRLMYIIIIVTGVWLYL, WYGLKMLAGILVIAGMEMVLV, and ATGAFWGLFIIALVAVFYLGL.

This sequence belongs to the UPF0344 family.

Its subcellular location is the cell membrane. This chain is UPF0344 protein BCAH187_A1308, found in Bacillus cereus (strain AH187).